The primary structure comprises 408 residues: Cell division protein FtsZ 2 (408 aa).

GTP contacts are provided by residues 130-132 (GTG), Glu169, Arg173, and Asp216.

This sequence belongs to the FtsZ family. As to quaternary structure, homodimer. Polymerizes to form a dynamic ring structure in a strictly GTP-dependent manner. Interacts directly with several other division proteins.

Its subcellular location is the cytoplasm. In terms of biological role, essential cell division protein that forms a contractile ring structure (Z ring) at the future cell division site. The regulation of the ring assembly controls the timing and the location of cell division. One of the functions of the FtsZ ring is to recruit other cell division proteins to the septum to produce a new cell wall between the dividing cells. Binds GTP and shows GTPase activity. The protein is Cell division protein FtsZ 2 of Pyrococcus furiosus (strain ATCC 43587 / DSM 3638 / JCM 8422 / Vc1).